The following is a 108-amino-acid chain: Inner membrane protein H108R (108 aa).

Residues 10–32 form a helical membrane-spanning segment; the sequence is LIVIITILITTRELSTTMLIVSL. The span at 49-64 shows a compositional bias: polar residues; it reads ENNTFSMPQKNSFSES. Residues 49–69 are disordered; that stretch reads ENNTFSMPQKNSFSESYNKDK. N-linked (GlcNAc...) asparagine; by host glycosylation is present at N50.

This sequence belongs to the asfivirus H108R family.

It is found in the virion membrane. The polypeptide is Inner membrane protein H108R (Ornithodoros (relapsing fever ticks)).